The chain runs to 231 residues: Phosphoglycolate phosphatase (231 aa).

The Nucleophile role is filled by Asp9. Positions 9 and 11 each coordinate Mg(2+). Asp11 functions as the Proton donor in the catalytic mechanism. Lys154 lines the substrate pocket. Residues Asp177 and Asp181 each coordinate Mg(2+).

It belongs to the archaeal SPP-like hydrolase family. As to quaternary structure, homodimer. It depends on Mg(2+) as a cofactor.

It carries out the reaction 2-phosphoglycolate + H2O = glycolate + phosphate. In terms of biological role, catalyzes the dephosphorylation of 2-phosphoglycolate. Has phosphatase activity towards p-nitrophenylphosphate (in vitro). The sequence is that of Phosphoglycolate phosphatase from Pyrococcus horikoshii (strain ATCC 700860 / DSM 12428 / JCM 9974 / NBRC 100139 / OT-3).